Reading from the N-terminus, the 217-residue chain is Frataxin, mitochondrial (217 aa).

A mitochondrion-targeting transit peptide spans 1–42 (MWTLGRRSVASFLPRSALPGFAPTRAGAPRPAKDLSLSGLPG).

It belongs to the frataxin family. As to quaternary structure, component of the mitochondrial core iron-sulfur cluster (ISC) complex composed of NFS1, LYRM4, NDUFAB1, ISCU, FXN, and FDX2; this complex is a heterohexamer containing two copies of each monomer. Homodimer. Monomer (probable predominant form). Oligomer. Monomers and polymeric aggregates of &gt;1 MDa have been isolated from mitochondria. A small fraction of heterologous overexpressed recombinant frataxin forms high-molecular weight aggregates that incorporate iron. Interacts with LYRM4. Interacts (via ferrous form) with ISCU; the interaction is possible when both are bound to the dimeric form of the cysteine desulfurase complex (NFS1:LYRM4) and the interaction enhances FXN interaction to the dimeric form of the cysteine desulfurase complex (NFS1:LYRM4). Interacts with FECH; one iron-bound FXN monomer seems to interact with a FECH homodimer. Interacts with SDHA and SDHB. Interacts with ACO2; the interaction is dependent on citrate. Interacts with HSPA9. Interacts with ACO1. Interacts with ISCU (cytoplasmic form). Post-translationally, processed in two steps by mitochondrial processing peptidase (MPP). MPP first cleaves the precursor to intermediate form and subsequently converts the intermediate to yield frataxin mature form (frataxin(81-210)) which is the predominant form. The additional forms, frataxin(56-210) and frataxin(78-210), seem to be produced when the normal maturation process is impaired; their physiological relevance is unsure.

Its subcellular location is the mitochondrion. It localises to the cytoplasm. The protein localises to the cytosol. The enzyme catalyses 4 Fe(2+) + O2 + 4 H(+) = 4 Fe(3+) + 2 H2O. Its function is as follows. Functions as an activator of persulfide transfer to the scaffoding protein ISCU as component of the core iron-sulfur cluster (ISC) assembly complex and participates to the [2Fe-2S] cluster assembly. Accelerates sulfur transfer from NFS1 persulfide intermediate to ISCU and to small thiols such as L-cysteine and glutathione leading to persulfuration of these thiols and ultimately sulfide release. Binds ferrous ion and is released from FXN upon the addition of both L-cysteine and reduced FDX2 during [2Fe-2S] cluster assembly. The core iron-sulfur cluster (ISC) assembly complex is involved in the de novo synthesis of a [2Fe-2S] cluster, the first step of the mitochondrial iron-sulfur protein biogenesis. This process is initiated by the cysteine desulfurase complex (NFS1:LYRM4:NDUFAB1) that produces persulfide which is delivered on the scaffold protein ISCU in a FXN-dependent manner. Then this complex is stabilized by FDX2 which provides reducing equivalents to accomplish the [2Fe-2S] cluster assembly. Finally, the [2Fe-2S] cluster is transferred from ISCU to chaperone proteins, including HSCB, HSPA9 and GLRX5. May play a role in the protection against iron-catalyzed oxidative stress through its ability to catalyze the oxidation of Fe(2+) to Fe(3+); the oligomeric form but not the monomeric form has in vitro ferroxidase activity. May be able to store large amounts of iron in the form of a ferrihydrite mineral by oligomerization; however, the physiological relevance is unsure as reports are conflicting and the function has only been shown using heterologous overexpression systems. May function as an iron chaperone protein that protects the aconitase [4Fe-4S]2+ cluster from disassembly and promotes enzyme reactivation. May play a role as a high affinity iron binding partner for FECH that is capable of both delivering iron to ferrochelatase and mediating the terminal step in mitochondrial heme biosynthesis. Modulates the RNA-binding activity of ACO1. May be involved in the cytoplasmic iron-sulfur protein biogenesis. May contribute to oxidative stress resistance and overall cell survival. The protein is Frataxin, mitochondrial of Bos taurus (Bovine).